A 316-amino-acid chain; its full sequence is Apolipoprotein E (316 aa).

Residues 1–18 (MKVLWVAVVVALLAGCQA) form the signal peptide. Thr-32 carries an O-linked (GalNAc...) threonine glycan. Tandem repeats lie at residues 79 to 100 (ALME…GQLG), 101 to 122 (PMAQ…ARLG), 123 to 144 (SDME…AMLG), 145 to 166 (QSTE…KRLL), 167 to 188 (RDAD…EGAE), 189 to 210 (RSLS…SRAA), 211 to 232 (TLST…QKLH), and 233 to 254 (GRLE…QQLE). An 8 X 22 AA approximate tandem repeats region spans residues 79-254 (ALMEETMKEV…RLDKIRQQLE (176 aa)). Position 142 is a methionine sulfoxide (Met-142). Position 146 is a phosphoserine (Ser-146). The tract at residues 157–167 (HLRKLPKRLLR) is LDL and other lipoprotein receptors binding. 161 to 164 (LPKR) is a binding site for heparin. The lipid-binding and lipoprotein association stretch occupies residues 209 to 289 (AATLSTLAGQ…SWFEPLVEDM (81 aa)). Thr-211 carries an O-linked (GalNAc...) threonine glycan. 228-235 (RQKLHGRL) lines the heparin pocket. The homooligomerization stretch occupies residues 265-316 (NQMRLQAEAFQARLRSWFEPLVEDMQRQWAGLVEKVQLALRPSPTSPPSENH). The interval 277–289 (RLRSWFEPLVEDM) is specificity for association with VLDL. Residue Thr-309 is glycosylated (O-linked (GalNAc...) threonine). Residue Ser-310 is glycosylated (O-linked (GalNAc...) serine).

The protein belongs to the apolipoprotein A1/A4/E family. As to quaternary structure, homotetramer. May interact with ABCA1; functionally associated with ABCA1 in the biogenesis of HDLs. May interact with APP/A4 amyloid-beta peptide; the interaction is extremely stable in vitro but its physiological significance is unclear. May interact with MAPT. May interact with MAP2. In the cerebrospinal fluid, interacts with secreted SORL1. Interacts with PMEL; this allows the loading of PMEL luminal fragment on ILVs to induce fibril nucleation. In terms of processing, APOE exists as multiple glycosylated and sialylated glycoforms within cells and in plasma. The extent of glycosylation and sialylation are tissue and context specific. Glycated in plasma VLDL. Post-translationally, phosphorylated by FAM20C in the extracellular medium.

Its subcellular location is the secreted. The protein localises to the extracellular space. The protein resides in the extracellular matrix. It localises to the extracellular vesicle. It is found in the endosome. Its subcellular location is the multivesicular body. Functionally, APOE is an apolipoprotein, a protein associating with lipid particles, that mainly functions in lipoprotein-mediated lipid transport between organs via the plasma and interstitial fluids. APOE is a core component of plasma lipoproteins and is involved in their production, conversion and clearance. Apolipoproteins are amphipathic molecules that interact both with lipids of the lipoprotein particle core and the aqueous environment of the plasma. As such, APOE associates with chylomicrons, chylomicron remnants, very low density lipoproteins (VLDL) and intermediate density lipoproteins (IDL) but shows a preferential binding to high-density lipoproteins (HDL). It also binds a wide range of cellular receptors including the LDL receptor/LDLR and the very low-density lipoprotein receptor/VLDLR that mediate the cellular uptake of the APOE-containing lipoprotein particles. Finally, APOE also has a heparin-binding activity and binds heparan-sulfate proteoglycans on the surface of cells, a property that supports the capture and the receptor-mediated uptake of APOE-containing lipoproteins by cells. The chain is Apolipoprotein E (APOE) from Bos taurus (Bovine).